Here is a 75-residue protein sequence, read N- to C-terminus: Nigwaprin-a (75 aa).

The signal sequence occupies residues 1–24 (MSSGGLLLLLGLLTLWAELTPVSG). Residues 27-72 (RPVKPGLCPPRPQKPPCVKECKNDWSCRGEQKCCRYGCIYECRDPI) form the WAP domain. Intrachain disulfides connect cysteine 34/cysteine 60, cysteine 43/cysteine 64, cysteine 47/cysteine 59, and cysteine 53/cysteine 68.

It belongs to the venom waprin family. Expressed by the venom gland.

The protein localises to the secreted. In terms of biological role, damages membranes of susceptible bacteria. Has no hemolytic activity. Not toxic to mice. Does not inhibit the proteinases elastase and cathepsin G. The polypeptide is Nigwaprin-a (Cryptophis nigrescens (Eastern small-eyed snake)).